The chain runs to 837 residues: Protein translocase subunit SecA (837 aa).

ATP-binding positions include Q85, 103-107 (GEGKT), and D493. Residues C821, C823, C832, and H833 each contribute to the Zn(2+) site.

This sequence belongs to the SecA family. Monomer and homodimer. Part of the essential Sec protein translocation apparatus which comprises SecA, SecYEG and auxiliary proteins SecDF. Other proteins may also be involved. The cofactor is Zn(2+).

The protein localises to the cell membrane. It localises to the cytoplasm. The catalysed reaction is ATP + H2O + cellular proteinSide 1 = ADP + phosphate + cellular proteinSide 2.. In terms of biological role, part of the Sec protein translocase complex. Interacts with the SecYEG preprotein conducting channel. Has a central role in coupling the hydrolysis of ATP to the transfer of proteins into and across the cell membrane, serving as an ATP-driven molecular motor driving the stepwise translocation of polypeptide chains across the membrane. This is Protein translocase subunit SecA from Streptococcus pneumoniae (strain ATCC BAA-255 / R6).